Consider the following 646-residue polypeptide: Protein real-time (646 aa).

The region spanning 2–175 (VQKYESPVRI…FINELKKEGI (174 aa)) is the PRELI/MSF1 domain. Residues 294–471 (TPVVVEKYFP…FLGGSCITMI (178 aa)) enclose the CRAL-TRIO domain. Residues 499–646 (HHGLYKSVDL…GFSSNSLQSR (148 aa)) form the GOLD domain.

The protein resides in the mitochondrion. The chain is Protein real-time from Aedes aegypti (Yellowfever mosquito).